We begin with the raw amino-acid sequence, 903 residues long: uncharacterized protein (903 aa).

This is an uncharacterized protein from Gallid herpesvirus 2 (strain Chicken/Md5/ATCC VR-987) (GaHV-2).